Here is a 383-residue protein sequence, read N- to C-terminus: MKTKLPNFIEIYRQLIATPSISATDSALDQSNETLINLLGGWFRDLGFTVEVQPVPGTRNKFNMLAKSGSGAGGLLLAGHTDTVPFDDGRWTRDPFTLTEHDNKLYGLGTADMKGFFAFILDTLRDVELSTLKKPLYILATADEETTMAGAKYFSESTALRPDCAIIGEPTSLKPVRAHKGHISNAIRIQGQSGHSSDPGRGVNAIELMHESITQLMALRNTLKERYRHAGFAIPYPTMNFGHIHGGDAANRICACCELHMDIRPLPGLTLSDLDGLLNEALAPVSARWPGRLTVGELHPPIPGYECPREHQLVQVVEKLLGRETEVVNYCTEAPFIQQVCPTLVLGPGSIEQAHQPDEFIDTAFIKPTRDLIAQVVHHFCHH.

Position 80 (His-80) interacts with Zn(2+). Asp-82 is an active-site residue. Residue Asp-112 coordinates Zn(2+). Residue Glu-144 is part of the active site. Residues Glu-145, Glu-169, and His-355 each contribute to the Zn(2+) site.

This sequence belongs to the peptidase M20A family. ArgE subfamily. In terms of assembly, homodimer. The cofactor is Zn(2+). Co(2+) serves as cofactor. Requires glutathione as cofactor.

The protein resides in the cytoplasm. The enzyme catalyses N(2)-acetyl-L-ornithine + H2O = L-ornithine + acetate. The protein operates within amino-acid biosynthesis; L-arginine biosynthesis; L-ornithine from N(2)-acetyl-L-ornithine (linear): step 1/1. Its function is as follows. Catalyzes the hydrolysis of the amide bond of N(2)-acetylated L-amino acids. Cleaves the acetyl group from N-acetyl-L-ornithine to form L-ornithine, an intermediate in L-arginine biosynthesis pathway, and a branchpoint in the synthesis of polyamines. In Erwinia tasmaniensis (strain DSM 17950 / CFBP 7177 / CIP 109463 / NCPPB 4357 / Et1/99), this protein is Acetylornithine deacetylase.